Consider the following 228-residue polypeptide: MQKLKQQVFEANMELPRYGLVTFTWGNVSAIDRERGLVVIKPSGVAYETMKADDMVVVDMSGNVVEGEYRPSSDTATHLELYRRYPSLGGIVHTHSTHATAWAQAGLAIPALGTTHADYFFGDIPCTRGLSEEEVQGEYELNTGKVIIETLGDAEPLHTPGIVVYQHGPFAWGKDAHDAVHNAVVMEEVAKMAWIARSINPQLNHIDSFLMNKHFMRKHGPNAYYGQK.

Substrate contacts are provided by residues 26 to 27 (GN), 43 to 44 (SG), and 72 to 73 (SS). Zn(2+) is bound by residues aspartate 74, histidine 93, and histidine 95. Catalysis depends on aspartate 118, which acts as the Proton donor/acceptor. Histidine 167 serves as a coordination point for Zn(2+). Tyrosine 225 acts as the Proton donor/acceptor in catalysis.

This sequence belongs to the aldolase class II family. AraD/FucA subfamily. Zn(2+) is required as a cofactor.

It carries out the reaction L-ribulose 5-phosphate = D-xylulose 5-phosphate. Its pathway is cofactor degradation; L-ascorbate degradation; D-xylulose 5-phosphate from L-ascorbate: step 4/4. Functionally, catalyzes the isomerization of L-ribulose 5-phosphate to D-xylulose 5-phosphate. Is involved in the anaerobic L-ascorbate utilization. The chain is L-ribulose-5-phosphate 4-epimerase UlaF from Escherichia coli O81 (strain ED1a).